The following is a 101-amino-acid chain: TrfB transcriptional repressor protein (101 aa).

Positions 37-56 form a DNA-binding region, H-T-H motif; the sequence is QATFATSLGLTRGAVSQAVH.

In terms of biological role, in conjunction with KorB, inhibits the transcription of kilA, trfA and korAB operons. In conjunction with KorC is responsible for the negative control of kilC and kilE operons. The protein is TrfB transcriptional repressor protein (trfB) of Escherichia coli.